The following is a 319-amino-acid chain: tRNA pseudouridine synthase B (319 aa).

Catalysis depends on Asp-47, which acts as the Nucleophile.

The protein belongs to the pseudouridine synthase TruB family. Type 1 subfamily.

The enzyme catalyses uridine(55) in tRNA = pseudouridine(55) in tRNA. Its function is as follows. Responsible for synthesis of pseudouridine from uracil-55 in the psi GC loop of transfer RNAs. This chain is tRNA pseudouridine synthase B, found in Pseudoalteromonas translucida (strain TAC 125).